The following is a 136-amino-acid chain: ATP synthase epsilon chain (136 aa).

Belongs to the ATPase epsilon chain family. F-type ATPases have 2 components, CF(1) - the catalytic core - and CF(0) - the membrane proton channel. CF(1) has five subunits: alpha(3), beta(3), gamma(1), delta(1), epsilon(1). CF(0) has three main subunits: a, b and c.

The protein resides in the cell membrane. In terms of biological role, produces ATP from ADP in the presence of a proton gradient across the membrane. The polypeptide is ATP synthase epsilon chain (Herpetosiphon aurantiacus (strain ATCC 23779 / DSM 785 / 114-95)).